A 186-amino-acid polypeptide reads, in one-letter code: Casparian strip membrane protein 3 (186 aa).

The Cytoplasmic segment spans residues 1 to 26 (MKGSSEHGETSKAAPLGRGGVSKGVS). Residues 27-47 (VLDLILRFIAIIGTLASAIAM) traverse the membrane as a helical segment. The Extracellular segment spans residues 48–74 (GTTNETLPFFTQFIRFKAQYSDLPTLT). N-linked (GlcNAc...) asparagine glycosylation is present at N51. The helical transmembrane segment at 75 to 95 (FFVVANSIVCAYLILSLPLSI) threads the bilayer. The Cytoplasmic portion of the chain corresponds to 96 to 107 (VHIIRSRAKYSR). Residues 108–128 (LLLIFLDAAMLALVTAGASAA) traverse the membrane as a helical segment. Topologically, residues 129–161 (AAIVYLAHKGNVRANWLAICQQFDSFCERISGS) are extracellular. The chain crosses the membrane as a helical span at residues 162–182 (LIGSFGAMVMLILLILLSAIA). Residues 183–186 (LARR) are Cytoplasmic-facing.

The protein belongs to the Casparian strip membrane proteins (CASP) family. Homodimer and heterodimers.

The protein resides in the cell membrane. Functionally, regulates membrane-cell wall junctions and localized cell wall deposition. Required for establishment of the Casparian strip membrane domain (CSD) and the subsequent formation of Casparian strips, a cell wall modification of the root endodermis that determines an apoplastic barrier between the intraorganismal apoplasm and the extraorganismal apoplasm and prevents lateral diffusion. The protein is Casparian strip membrane protein 3 of Sorghum bicolor (Sorghum).